A 1364-amino-acid chain; its full sequence is Pleckstrin homology domain-containing family H member 1 (1364 aa).

Residues 28–169 (FRLQASKIRE…VGSLQDALEA (142 aa)) adopt a coiled-coil conformation. 5 disordered regions span residues 184 to 266 (GAAE…SPPH), 296 to 321 (GTKT…PGTP), 356 to 395 (LHPS…ESPK), 487 to 529 (PFMD…IKRG), and 546 to 568 (DACS…SSYS). Polar residues predominate over residues 237–246 (EDSSSSTVHS). Residues 364–379 (LESRARSREEPEKMEM) show a composition bias toward basic and acidic residues. Residues 509 to 520 (VPSSESRKTSGL) are compositionally biased toward polar residues. PH domains are found at residues 578 to 672 (SLEK…SLLK) and 687 to 796 (KPTV…VAAG). Position 745 is a phosphoserine (Ser745). Positions 832–986 (YSKDGLYASL…PSRMEVVSIL (155 aa)) constitute a MyTH4 domain. Positions 997 to 1333 (FSIPVHFTNG…NHCTTTVNPP (337 aa)) constitute an FERM domain.

This chain is Pleckstrin homology domain-containing family H member 1 (PLEKHH1), found in Homo sapiens (Human).